We begin with the raw amino-acid sequence, 447 residues long: MSMTPREIVHELNRHIIGQDDAKRAVAIALRNRWRRMQLPAELRAEVTPKNILMIGPTGVGKTEIARRLAKLANAPFLKVEATKFTEVGYVGRDVESIIRDLADAAMKMLREQEIIRVRHRAEDAAEDRILDALLPQARVTSFSEEAAQTSSDSNTRQLFRKRLREGQLDDKEIEIEVADAVGVEIAAPPGMEEMTNQLQSLFANMGKGKRKARKLKVKEALKMVRDEEASRLVNDDDLKAKALEAVEQHGIVFIDEIDKVAKRGNVGGADVSREGVQRDLLPLIEGCTVNTKLGMVKTDHILFIASGAFHLSKPSDLVPELQGRLPIRVELKALTPEDFERILQEPHASLTEQYRELLKTEGLNIEFKADGIKRLAEIAYQVNEKTENIGARRLHTLLERLLEEVSFSAGDLASAHDEAPIQIDAAYVNGHLGELAQNEDLSRYIL.

ATP is bound by residues isoleucine 17, 59–64 (GVGKTE), aspartate 256, glutamate 321, and arginine 393.

Belongs to the ClpX chaperone family. HslU subfamily. A double ring-shaped homohexamer of HslV is capped on each side by a ring-shaped HslU homohexamer. The assembly of the HslU/HslV complex is dependent on binding of ATP.

The protein resides in the cytoplasm. ATPase subunit of a proteasome-like degradation complex; this subunit has chaperone activity. The binding of ATP and its subsequent hydrolysis by HslU are essential for unfolding of protein substrates subsequently hydrolyzed by HslV. HslU recognizes the N-terminal part of its protein substrates and unfolds these before they are guided to HslV for hydrolysis. The protein is ATP-dependent protease ATPase subunit HslU of Pseudomonas putida (strain W619).